Reading from the N-terminus, the 571-residue chain is MAKISRQAYAEMFGPTTGDRLRLADTGLIIEIEKDFTIYGEEVKFGGGKVIRDGMGQSQRMASDCVDTVITNALIVDHWGIVKADIGLKGGRIAAIGKAGNPDIQPGVTIVVGPGTEVIAGEGMIVTAGGIDSHIHFICPQQIEEALMSGVTTMIGGGTGPATGTFATTVTPGPWYMERMLQAADAYPMNIGLLGKGNASQQGPLLEQVEAGAIGLKLHEDWGTTPAAIDTCLSVADATDTQVAIHTDTLNEAGFVEATIAAFKGRTIHTYHTEGAGGGHAPDIIKVCGEANVLPSSTNPTRPYTVNTLDEHLDMLMVCHHLDPSIAEDIAFAESRIRRETIAAEDILHDLGAFSMISSDSQAMGRVGEVIIRTWQTAHKMALQRGKLPGDPNDARGGHDNFRVKRYVAKYTINPALTHGIAHEVGSVEVGKWADLVLWRPAFFGVKPSLILKGGMIAAAAMGDPNASIPTPQPVHYRPMFASAGGALHRSSLTFVSQAALAAGIGERYGLAKTLSAVRGTRTVSKRDMVHNDWQPHVTVDPETYQVVADGQLLTCEPATELPMAQRYFLF.

A Urease domain is found at 129–571 (GGIDSHIHFI…LPMAQRYFLF (443 aa)). Positions 134, 136, and 217 each coordinate Ni(2+). K217 carries the post-translational modification N6-carboxylysine. A substrate-binding site is contributed by H219. Residues H246 and H272 each contribute to the Ni(2+) site. H320 functions as the Proton donor in the catalytic mechanism. D360 contributes to the Ni(2+) binding site.

The protein belongs to the metallo-dependent hydrolases superfamily. Urease alpha subunit family. Heterotrimer of UreA (gamma), UreB (beta) and UreC (alpha) subunits. Three heterotrimers associate to form the active enzyme. It depends on Ni cation as a cofactor. Post-translationally, carboxylation allows a single lysine to coordinate two nickel ions.

It localises to the cytoplasm. It catalyses the reaction urea + 2 H2O + H(+) = hydrogencarbonate + 2 NH4(+). Its pathway is nitrogen metabolism; urea degradation; CO(2) and NH(3) from urea (urease route): step 1/1. The sequence is that of Urease subunit alpha from Cupriavidus necator (strain ATCC 17699 / DSM 428 / KCTC 22496 / NCIMB 10442 / H16 / Stanier 337) (Ralstonia eutropha).